Reading from the N-terminus, the 296-residue chain is Protein TIC 21, chloroplastic (296 aa).

A chloroplast-targeting transit peptide spans 1-90; it reads MQSLLLPPAS…VAFSYPTSPS (90 aa). 4 consecutive transmembrane segments (helical) span residues 125 to 145, 156 to 176, 208 to 228, and 250 to 270; these read FWGQ…SIVV, YATA…FGYI, VNIL…GFLV, and VLAL…SHFL.

In terms of assembly, homomultimer. Part of the translocon complex. In terms of tissue distribution, ubiquitous. Highest expression in green tissues and very low levels in mature pollen.

The protein localises to the plastid. Its subcellular location is the chloroplast inner membrane. Involved in chloroplast protein import across the inner envelope membrane. Also acts as a chloroplast permease regulating the iron transport and homeostasis. Involved in the uptake and sequestration of iron in plastids. The chain is Protein TIC 21, chloroplastic (TIC21) from Arabidopsis thaliana (Mouse-ear cress).